The sequence spans 378 residues: Cytochrome b (378 aa).

The next 4 membrane-spanning stretches (helical) occupy residues 33–53 (FGSLLGACLMIQITTGLFLAM), 77–98 (WMIRLLHANGASMFFVCLFLHT), 113–133 (WNIGTILLLMTMATAFMGYVL), and 178–198 (FFTFHFILPFIITALATIHLL). 2 residues coordinate heme b: His-83 and His-97. Residues His-182 and His-196 each contribute to the heme b site. His-201 lines the a ubiquinone pocket. 4 helical membrane-spanning segments follow: residues 226-246 (TKDIFGLTLLLLLLTSLTLFT), 288-308 (LGGVLALLLSIMILTIIPATH), 320-340 (ITQILFWTLAADLLTLTWIGG), and 347-366 (FEAIGQTASIAYFLIITLIP).

It belongs to the cytochrome b family. As to quaternary structure, the cytochrome bc1 complex contains 11 subunits: 3 respiratory subunits (MT-CYB, CYC1 and UQCRFS1), 2 core proteins (UQCRC1 and UQCRC2) and 6 low-molecular weight proteins (UQCRH/QCR6, UQCRB/QCR7, UQCRQ/QCR8, UQCR10/QCR9, UQCR11/QCR10 and a cleavage product of UQCRFS1). This cytochrome bc1 complex then forms a dimer. It depends on heme b as a cofactor.

It is found in the mitochondrion inner membrane. In terms of biological role, component of the ubiquinol-cytochrome c reductase complex (complex III or cytochrome b-c1 complex) that is part of the mitochondrial respiratory chain. The b-c1 complex mediates electron transfer from ubiquinol to cytochrome c. Contributes to the generation of a proton gradient across the mitochondrial membrane that is then used for ATP synthesis. This is Cytochrome b (MT-CYB) from Cebus albifrons (White-fronted capuchin).